The sequence spans 345 residues: Acetylserotonin O-methyltransferase (345 aa).

S-adenosyl-L-methionine-binding positions include Y147, W164, D210, 235 to 237 (GDF), and R252. The active-site Proton donor/acceptor is the H255. Substrate is bound by residues D256, N302, and Q306.

The protein belongs to the class I-like SAM-binding methyltransferase superfamily. Cation-independent O-methyltransferase family. In terms of assembly, homodimer. Expressed in the pineal gland (at protein level). In the retina, very low expression is found at the mRNA level, and not at the protein level.

It carries out the reaction N-acetylserotonin + S-adenosyl-L-methionine = melatonin + S-adenosyl-L-homocysteine + H(+). Its pathway is aromatic compound metabolism; melatonin biosynthesis; melatonin from serotonin: step 1/2. In terms of biological role, catalyzes the transfer of a methyl group onto N-acetylserotonin, producing melatonin (N-acetyl-5-methoxytryptamine). Its function is as follows. Does not show Acetylserotonin O-methyltransferase activity. The polypeptide is Acetylserotonin O-methyltransferase (ASMT) (Homo sapiens (Human)).